The sequence spans 380 residues: Cytochrome b (380 aa).

The next 4 helical transmembrane spans lie at 34–54 (FGSL…LLAM), 78–99 (WLIR…YLHI), 114–134 (WNTG…GYVL), and 179–199 (FFAL…IHLT). Positions 84 and 98 each coordinate heme b. Heme b contacts are provided by His-183 and His-197. His-202 lines the a ubiquinone pocket. 4 helical membrane passes run 227–247 (LKDI…ALFS), 289–309 (LGGV…PLLH), 321–341 (LSQL…WIGS), and 348–368 (FIII…VLFP).

This sequence belongs to the cytochrome b family. As to quaternary structure, the cytochrome bc1 complex contains 11 subunits: 3 respiratory subunits (MT-CYB, CYC1 and UQCRFS1), 2 core proteins (UQCRC1 and UQCRC2) and 6 low-molecular weight proteins (UQCRH/QCR6, UQCRB/QCR7, UQCRQ/QCR8, UQCR10/QCR9, UQCR11/QCR10 and a cleavage product of UQCRFS1). This cytochrome bc1 complex then forms a dimer. The cofactor is heme b.

The protein resides in the mitochondrion inner membrane. Component of the ubiquinol-cytochrome c reductase complex (complex III or cytochrome b-c1 complex) that is part of the mitochondrial respiratory chain. The b-c1 complex mediates electron transfer from ubiquinol to cytochrome c. Contributes to the generation of a proton gradient across the mitochondrial membrane that is then used for ATP synthesis. In Thalassarche impavida (Albatross), this protein is Cytochrome b (MT-CYB).